The primary structure comprises 691 residues: Elongation factor G (691 aa).

In terms of domain architecture, tr-type G spans 12–286 (NKLRNIGIMA…GIVRYLPSPL (275 aa)). GTP is bound by residues 21–28 (AHIDAGKT), 85–89 (DTPGH), and 139–142 (NKMD).

The protein belongs to the TRAFAC class translation factor GTPase superfamily. Classic translation factor GTPase family. EF-G/EF-2 subfamily.

It is found in the cytoplasm. Catalyzes the GTP-dependent ribosomal translocation step during translation elongation. During this step, the ribosome changes from the pre-translocational (PRE) to the post-translocational (POST) state as the newly formed A-site-bound peptidyl-tRNA and P-site-bound deacylated tRNA move to the P and E sites, respectively. Catalyzes the coordinated movement of the two tRNA molecules, the mRNA and conformational changes in the ribosome. This chain is Elongation factor G, found in Fervidobacterium nodosum (strain ATCC 35602 / DSM 5306 / Rt17-B1).